Reading from the N-terminus, the 500-residue chain is Envelop protein OPG153 (500 aa).

Cys43 and Cys342 are disulfide-bonded.

This sequence belongs to the orthopoxvirus OPG153 protein family. Interacts with proteins OPG094 and OPG143. Interacts with OPG154. Interacts with OPG152. Interacts with host laminin.

Its subcellular location is the virion membrane. In terms of biological role, envelop protein that mediates acid-dependent endocytosis into host cells. Plays an important role in endocytic entry of the virus by acting as an acid-sensitive membrane fusion suppressor. Low pH in host endosomes triggers conformational changes to allow de-repression of viral fusion complex activity and membrane fusion within vesicles. Also plays a role in bridging the mature virion with structural protein OPG152. The protein is Envelop protein OPG153 (OPG153) of Vaccinia virus (strain Western Reserve) (VACV).